A 61-amino-acid polypeptide reads, in one-letter code: Large ribosomal subunit protein bL32 (61 aa).

Residues 1–16 show a composition bias toward basic residues; the sequence is MAVPKRKTSPSKRGMR. Residues 1–61 are disordered; it reads MAVPKRKTSP…RQVLTPKESA (61 aa). The span at 28-44 shows a compositional bias: basic and acidic residues; the sequence is VEDKNSGELRRPHHIDL.

The protein belongs to the bacterial ribosomal protein bL32 family.

The polypeptide is Large ribosomal subunit protein bL32 (Rhizobium etli (strain CIAT 652)).